Consider the following 411-residue polypeptide: Dipeptidase 1 (411 aa).

Positions 1-16 (MWSGWWLWPLVAVCTA) are cleaved as a signal peptide. 2 residues coordinate Zn(2+): His36 and Asp38. The N-linked (GlcNAc...) asparagine glycan is linked to Asn57. A disulfide bond links Cys87 and Cys170. Glu141 serves as a coordination point for Zn(2+). His168 contacts substrate. Residues His214 and His235 each contribute to the Zn(2+) site. A disulfide bond links Cys242 and Cys274. Residue Arg246 coordinates substrate. A glycan (N-linked (GlcNAc...) asparagine) is linked at Asn279. Residue Asp304 coordinates substrate. Residues Asn332 and Asn358 are each glycosylated (N-linked (GlcNAc...) asparagine). Ser385 is lipidated: GPI-anchor amidated serine. A propeptide spans 386 to 411 (GASSLHRHWGLLLASLAPLVLCLSLL) (removed in mature form).

This sequence belongs to the metallo-dependent hydrolases superfamily. Peptidase M19 family. As to quaternary structure, homodimer; disulfide-linked. Zn(2+) is required as a cofactor. As to expression, expressed in lung and kidneys.

Its subcellular location is the apical cell membrane. It is found in the cell projection. It localises to the microvillus membrane. The enzyme catalyses an L-aminoacyl-L-amino acid + H2O = 2 an L-alpha-amino acid. It carries out the reaction leukotriene D4 + H2O = leukotriene E4 + glycine. It catalyses the reaction a beta-lactam + H2O = a substituted beta-amino acid. The catalysed reaction is L-cystine-bis-glycine + 2 H2O = L-cystine + 2 glycine. The enzyme catalyses glycyldehydrophenylalanine + H2O = 2,3-didehydrophenylalanine + glycine. Inhibited by L-penicillamine. Beta-lactamase activity is inhibited by cilastatin. Hydrolyzes a wide range of dipeptides including the conversion of leukotriene D4 to leukotriene E4. Hydrolyzes cystinyl-bis-glycine (cys-bis-gly) formed during glutathione degradation. Also possesses beta lactamase activity and can hydrolyze the beta-lactam antibiotic imipenem. In terms of biological role, independently of its dipeptidase activity, acts as an adhesion receptor for neutrophil recruitment from bloodstream into inflamed lungs and liver. The sequence is that of Dipeptidase 1 (DPEP1) from Homo sapiens (Human).